The sequence spans 250 residues: MKILISNDDGVNAEGIAALTTALNQIAETLTVGPDRNCSGASNSLTLTNPLRLNTLDNGFISVSGTPTDCVHLAIRELYQDEPDMVVSGINAGANMGDDTLYSGTVAAAMEGRFLGFPAIAISLVGHELKHYDTAAHYALKIVKALQDSPIAQDKILNINVPDLPLAEVKGIKITRLGARHRAEGMVRTQDPAGREIFWLGPPGDEQDASDGTDFYAVANGYVSITPLTVDLTAFEQLSALESWLTQIHD.

4 residues coordinate a divalent metal cation: Asp-8, Asp-9, Ser-39, and Asn-91.

Belongs to the SurE nucleotidase family. It depends on a divalent metal cation as a cofactor.

It localises to the cytoplasm. It catalyses the reaction a ribonucleoside 5'-phosphate + H2O = a ribonucleoside + phosphate. Nucleotidase that shows phosphatase activity on nucleoside 5'-monophosphates. The polypeptide is 5'-nucleotidase SurE (Shewanella halifaxensis (strain HAW-EB4)).